We begin with the raw amino-acid sequence, 375 residues long: Probable pectin lyase D (375 aa).

The N-terminal stretch at M1–G19 is a signal peptide. Disulfide bonds link C82–C101 and C91–C225. An N-linked (GlcNAc...) asparagine glycan is attached at N128. R255 is an active-site residue. The cysteines at positions 321 and 329 are disulfide-linked.

This sequence belongs to the polysaccharide lyase 1 family.

The protein localises to the secreted. The catalysed reaction is Eliminative cleavage of (1-&gt;4)-alpha-D-galacturonan methyl ester to give oligosaccharides with 4-deoxy-6-O-methyl-alpha-D-galact-4-enuronosyl groups at their non-reducing ends.. Pectinolytic enzymes consist of four classes of enzymes: pectin lyase, polygalacturonase, pectin methylesterase and rhamnogalacturonase. Among pectinolytic enzymes, pectin lyase is the most important in depolymerization of pectin, since it cleaves internal glycosidic bonds of highly methylated pectins. The polypeptide is Probable pectin lyase D (pelD) (Aspergillus flavus (strain ATCC 200026 / FGSC A1120 / IAM 13836 / NRRL 3357 / JCM 12722 / SRRC 167)).